The chain runs to 1432 residues: ABC transporter B family member 3 (1432 aa).

Disordered regions lie at residues 1–21 and 48–149; these read MDDG…EEEI and ITQP…KTEE. Low complexity-rich tracts occupy residues 52–62, 76–106, and 118–135; these read SNNNNNSNNNN, NNNN…FNNN, and NTNE…NNND. Residues 117–163 adopt a coiled-coil conformation; that stretch reads ENTNENNNKNNNNNNNNNDDYNDGADERVKTEEEIKKEAENELNQSV. The 300-residue stretch at 180–479 folds into the ABC transmembrane type-1 1 domain; the sequence is MFLGTIAAVI…ASPCLALFAQ (300 aa). The next 6 membrane-spanning stretches (helical) occupy residues 185 to 205, 232 to 252, 303 to 323, 325 to 345, 410 to 430, and 457 to 477; these read IAAV…GLVV, LLML…LWMI, KVGR…IGFT, GWQL…GGFF, GLGL…AFWY, and FFAV…LALF. In terms of domain architecture, ABC transporter 1 spans 514–750; the sequence is IEFKDVGFHY…QGLYFDLVEK (237 aa). Position 549–556 (549–556) interacts with ATP; that stretch reads GDSGGGKS. The tract at residues 787 to 819 is disordered; the sequence is KRSLRKNESESNKKDKEDSNNKKKKKSNKKKVE. Positions 791 to 807 are enriched in basic and acidic residues; that stretch reads RKNESESNKKDKEDSNN. Residues 837-1157 form the ABC transmembrane type-1 2 domain; that stretch reads WCFGFLSAVG…ASSFAPDLAK (321 aa). 6 helical membrane-spanning segments follow: residues 838-858, 882-902, 968-988, 989-1009, 1060-1080, and 1134-1154; these read CFGF…AMVF, LMFV…GFLF, MVGG…VIIA, CFPL…GFSS, ISGF…CLSF, and VFFA…FAPD. The ABC transporter 2 domain occupies 1192–1428; the sequence is IEFKNLHFSY…EGPYSQLWYN (237 aa). Residue 1227–1234 coordinates ATP; the sequence is GDSGGGKS.

Belongs to the ABC transporter superfamily. ABCB family. Multidrug resistance exporter (TC 3.A.1.201) subfamily.

The protein resides in the membrane. This Dictyostelium discoideum (Social amoeba) protein is ABC transporter B family member 3 (abcB3).